We begin with the raw amino-acid sequence, 370 residues long: Prolactin-releasing peptide receptor (370 aa).

Topologically, residues 1–62 are extracellular; that stretch reads MASSTTRGPR…LQLVHQLKGL (62 aa). N-linked (GlcNAc...) asparagine glycans are attached at residues N27 and N36. Residues 63–83 traverse the membrane as a helical segment; it reads IVLLYSVVVVVGLVGNCLLVL. The Cytoplasmic portion of the chain corresponds to 84–101; sequence VIARVRRLHNVTNFLIGN. The chain crosses the membrane as a helical span at residues 102–122; sequence LALSDVLMCTACVPLTLAYAF. At 123-126 the chain is on the extracellular side; that stretch reads EPRG. A helical transmembrane segment spans residues 127 to 147; the sequence is WVFGGGLCHLVFFLQPVTVYV. A disulfide bridge links C134 with C211. Topologically, residues 148 to 175 are cytoplasmic; it reads SVFTLTTIAVDRYVVLVHPLRRRISLRL. Residues 176-196 traverse the membrane as a helical segment; that stretch reads SAYAVLAIWALSAVLALPAAV. The Extracellular portion of the chain corresponds to 197 to 225; that stretch reads HTYHVELKPHDVRLCEEFWGSQERQRQLY. Residues 226-246 traverse the membrane as a helical segment; the sequence is AWGLLLVTYLLPLLVILLSYV. The Cytoplasmic portion of the chain corresponds to 247 to 276; the sequence is RVSVKLRNRVVPGCVTQSQADWDRARRRRT. Residues 277–297 traverse the membrane as a helical segment; that stretch reads FCLLVVIVVVFAVCWLPLHVF. Residues 298 to 317 lie on the Extracellular side of the membrane; the sequence is NLLRDLDPHAIDPYAFGLVQ. The chain crosses the membrane as a helical span at residues 318–338; the sequence is LLCHWLAMSSACYNPFIYAWL. Topologically, residues 339-369 are cytoplasmic; it reads HDSFREELRKLLVAWPRKIAPHGQNMTVSVV. Positions 365-370 are required for interaction with GRIP1, GRIP2 and PICK1; the sequence is TVSVVI.

This sequence belongs to the G-protein coupled receptor 1 family. As to quaternary structure, interacts through its C-terminal region with the PDZ domain-containing proteins GRIP1, GRIP2 and PICK1. Interacts with PDZ domains 4 and 5 of GRIP1 and with the PDZ domain of PICK1. Only detected in the pituitary gland and in all cell types of pituitary adenomas.

It localises to the cell membrane. In terms of biological role, receptor for prolactin-releasing peptide (PrRP). Implicated in lactation, regulation of food intake and pain-signal processing. The chain is Prolactin-releasing peptide receptor (PRLHR) from Homo sapiens (Human).